A 316-amino-acid chain; its full sequence is Pantothenate kinase (316 aa).

95–102 is an ATP binding site; sequence GSVAVGKS.

It belongs to the prokaryotic pantothenate kinase family.

Its subcellular location is the cytoplasm. The enzyme catalyses (R)-pantothenate + ATP = (R)-4'-phosphopantothenate + ADP + H(+). It participates in cofactor biosynthesis; coenzyme A biosynthesis; CoA from (R)-pantothenate: step 1/5. The polypeptide is Pantothenate kinase (Shewanella piezotolerans (strain WP3 / JCM 13877)).